Consider the following 411-residue polypeptide: L-cysteine:1D-myo-inositol 2-amino-2-deoxy-alpha-D-glucopyranoside ligase (411 aa).

Cys43 serves as a coordination point for Zn(2+). Residues 43–46 (CGIT), Thr58, and 81–83 (NVT) each bind L-cysteinyl-5'-AMP. The 'HIGH' region motif lies at 45–55 (ITPYDATHLGH). The 'ERGGDP' region motif lies at 186-191 (QRGGDP). Trp226 contributes to the L-cysteinyl-5'-AMP binding site. Cys230 is a binding site for Zn(2+). 248–250 (GSD) serves as a coordination point for L-cysteinyl-5'-AMP. His255 serves as a coordination point for Zn(2+). Ile282 serves as a coordination point for L-cysteinyl-5'-AMP. The 'KMSKS' region signature appears at 288–292 (KMSKS).

This sequence belongs to the class-I aminoacyl-tRNA synthetase family. MshC subfamily. As to quaternary structure, monomer. Zn(2+) is required as a cofactor.

The catalysed reaction is 1D-myo-inositol 2-amino-2-deoxy-alpha-D-glucopyranoside + L-cysteine + ATP = 1D-myo-inositol 2-(L-cysteinylamino)-2-deoxy-alpha-D-glucopyranoside + AMP + diphosphate + H(+). Functionally, catalyzes the ATP-dependent condensation of GlcN-Ins and L-cysteine to form L-Cys-GlcN-Ins. In Mycobacterium ulcerans (strain Agy99), this protein is L-cysteine:1D-myo-inositol 2-amino-2-deoxy-alpha-D-glucopyranoside ligase.